The following is a 283-amino-acid chain: Pantothenate synthetase (283 aa).

34 to 41 (MGALHDGH) contacts ATP. The Proton donor role is filled by His-41. Residue Gln-65 participates in (R)-pantoate binding. Gln-65 provides a ligand contact to beta-alanine. 152 to 155 (GQKD) serves as a coordination point for ATP. Gln-158 is a (R)-pantoate binding site. ATP contacts are provided by residues Val-181 and 189–192 (MSSR).

Belongs to the pantothenate synthetase family. Homodimer.

The protein localises to the cytoplasm. It carries out the reaction (R)-pantoate + beta-alanine + ATP = (R)-pantothenate + AMP + diphosphate + H(+). It participates in cofactor biosynthesis; (R)-pantothenate biosynthesis; (R)-pantothenate from (R)-pantoate and beta-alanine: step 1/1. In terms of biological role, catalyzes the condensation of pantoate with beta-alanine in an ATP-dependent reaction via a pantoyl-adenylate intermediate. This chain is Pantothenate synthetase, found in Nitrobacter hamburgensis (strain DSM 10229 / NCIMB 13809 / X14).